The following is a 754-amino-acid chain: Nitrate reductase (754 aa).

The segment at residues 1–31 (MKFTRRSFVKASALATAMVAAGCSPQPVAPK) is a signal peptide (tat-type signal). In terms of domain architecture, 4Fe-4S Mo/W bis-MGD-type spans 39–95 (ATWYKTVCRYCGVGCGVMVAAKDNRVVAVKGDTENPVNKGLLCVKGYYLDRIMNTEE). Cys-46, Cys-49, Cys-53, and Cys-81 together coordinate [4Fe-4S] cluster. Residues Lys-83, Gln-144, Asn-169, Cys-173, 256–258 (GTD), Met-341, Gln-345, Asn-451, Lys-497, Asp-524, 642–651 (TGRILEHWHT), Asn-728, and Lys-745 contribute to the Mo-bis(molybdopterin guanine dinucleotide) site.

This sequence belongs to the prokaryotic molybdopterin-containing oxidoreductase family. NasA/NapA/NarB subfamily. As to quaternary structure, component of the nitrate reductase NapAB complex composed of NapA and NapB. [4Fe-4S] cluster serves as cofactor. The cofactor is Mo-bis(molybdopterin guanine dinucleotide). Post-translationally, predicted to be exported by the Tat system. The position of the signal peptide cleavage has not been experimentally proven.

Its subcellular location is the secreted. It carries out the reaction 2 Fe(II)-[cytochrome] + nitrate + 2 H(+) = 2 Fe(III)-[cytochrome] + nitrite + H2O. Functionally, catalytic subunit of the nitrate reductase complex NapAB. Receives electrons from NapB and catalyzes the reduction of nitrate to nitrite. The polypeptide is Nitrate reductase (Symbiobacterium thermophilum (strain DSM 24528 / JCM 14929 / IAM 14863 / T)).